Here is a 358-residue protein sequence, read N- to C-terminus: MGKFGDFSSICRMAPIPLCASVGPITSIATGVGIEPDCYARNIEVANTIIFQGAASVMHIVALVMTVVMLLHVRGKFTAVGRKEITTFFYLYMILTFLSLCIDAGVIPPHSGSYPYFVAVQAGLASALVTCLVINGFVGFQLYEDGTPLSLWMLRLCSFVAFVISFLVGLATFKSWAGLGPTNTVGIFVVLYFLNALQLLLYVVMQIILVTRTLQDRWPLGDIAFGLFFFIAGQVILYAFSSPICEGISHYLDGLFFATTCNLLAVMMVYKYWDSITKEDLEFSVGTRMNNWEVKELLPQGPEEDRRATVYADPIYEGHYASGPGTGSGASASGYEGGHHRRESHGYTPSPNRQSLRY.

A run of 7 helical transmembrane segments spans residues 49 to 69 (IIFQGAASVMHIVALVMTVVM), 88 to 108 (FFYLYMILTFLSLCIDAGVIP), 117 to 137 (FVAVQAGLASALVTCLVINGF), 159 to 179 (FVAFVISFLVGLATFKSWAGL), 185 to 205 (VGIFVVLYFLNALQLLLYVVM), 220 to 240 (LGDIAFGLFFFIAGQVILYAF), and 250 to 270 (HYLDGLFFATTCNLLAVMMVY). The segment at 321-358 (ASGPGTGSGASASGYEGGHHRRESHGYTPSPNRQSLRY) is disordered. Polar residues predominate over residues 347–358 (YTPSPNRQSLRY).

It belongs to the CHS7 family. As to quaternary structure, interacts with chs-3.

The protein resides in the endoplasmic reticulum membrane. Functionally, chaperone required for the export of the chitin synthase chs-3 from the endoplasmic reticulum. The protein is Chitin synthase export chaperone (csc-1) of Neurospora crassa (strain ATCC 24698 / 74-OR23-1A / CBS 708.71 / DSM 1257 / FGSC 987).